The chain runs to 625 residues: tRNA uridine 5-carboxymethylaminomethyl modification enzyme MnmG (625 aa).

14 to 19 (GAGHAG) provides a ligand contact to FAD. 273-287 (GPRYCPSIEDKIVRF) provides a ligand contact to NAD(+).

This sequence belongs to the MnmG family. As to quaternary structure, homodimer. Heterotetramer of two MnmE and two MnmG subunits. FAD serves as cofactor.

Its subcellular location is the cytoplasm. Functionally, NAD-binding protein involved in the addition of a carboxymethylaminomethyl (cmnm) group at the wobble position (U34) of certain tRNAs, forming tRNA-cmnm(5)s(2)U34. In Clostridium botulinum (strain Hall / ATCC 3502 / NCTC 13319 / Type A), this protein is tRNA uridine 5-carboxymethylaminomethyl modification enzyme MnmG.